The sequence spans 876 residues: AP-1 complex subunit gamma-1 (876 aa).

HEAT repeat units follow at residues 97–135 (DERQEVLMLVTNSLKQDLNHSNQYVVGLALCALGNICSA), 136–173 (EMARDLAPEVERLIQFRDPNIRKKAALCSTRIIRKVPD), 248–284 (FLHIRLLRLLRVLGQGDADASDLMTDILAQVATKTES), 308–345 (SLRVLAINILGRFLSNRDNNIRYVALNMLMKAITFDDQ), 346–382 (AVQRHRVTILECVKDPDASIRKRALELVTLLVNENNV), 384–417 (QLTKELIDYLEISDEDFKEDLSAKICFIVEKFSP), 418–454 (EKLWYIDQMLKVLCEAGKFVKDDVWHALIVVISNASE), 506–545 (VTESDAVDVIEDAITRHNSDSTTKAMALVALLKLSSRFPS), and 560–599 (SLLLEMQQRAIEYNSIVDRHKNIRSSLVDRMPVLDEATFN). In terms of domain architecture, GAE spans 756 to 873 (PAYAPIVAYE…LEEGQVSNFP (118 aa)).

The protein belongs to the adaptor complexes large subunit family. As to quaternary structure, adaptor protein complex 1 (AP-1) is a heterotetramer composed of two large adaptins (gamma-type subunit and beta-type subunit), a medium adaptin (mu-type subunit) and a small adaptin (sigma-type subunit). Binds to EPSIN1. Interacts with DRP2A/ADL6 (via C-terminus).

Its subcellular location is the golgi apparatus. The protein resides in the cytoplasmic vesicle. It localises to the clathrin-coated vesicle membrane. Functionally, subunit of clathrin-associated adaptor protein complex 1 that plays a role in protein sorting at the trans-Golgi network and early endosomes (TGN/EE). The AP complexes mediate both the recruitment of clathrin to membranes and the recognition of sorting signals within the cytosolic tails of transmembrane cargo molecules. In Arabidopsis thaliana (Mouse-ear cress), this protein is AP-1 complex subunit gamma-1 (GAMMA-ADR).